The sequence spans 369 residues: Sulfate permease 2, chloroplastic (369 aa).

Residues Met1–Ser21 form a disordered region. The N-terminal 82 residues, Met1–Ser82, are a transit peptide targeting the chloroplast. The next 5 helical transmembrane spans lie at Val110–Val130, Thr156–Ile176, Val187–Met207, Val229–Val249, and Thr335–Ile355. One can recognise an ABC transmembrane type-1 domain in the interval Leu153–Lys356.

This sequence belongs to the ATP-binding cassette (ABC) (TC 3.A.1) superfamily. As to quaternary structure, part of the chloroplast sulfate permease holocomplex. May form a heterodimer with SLUP1.

It localises to the plastid. Its subcellular location is the chloroplast membrane. Functionally, part of the ABC-type chloroplast envelope-localized sulfate transporter. The sequence is that of Sulfate permease 2, chloroplastic (SULP2) from Chlamydomonas reinhardtii (Chlamydomonas smithii).